Reading from the N-terminus, the 154-residue chain is MSKMVMLLSSDGESFQVEEAVAVQSQTIAHMIEDDCVANGVPIANVTGVILSKVIEYCKKHVVSDSPTEESKDELKKWDAEFMKALEQSSTLFDVMLAANYLNIKDLLDLGCQTVADMITGKKPDEIRALLGIENDFTPEEEEEIRKENQWAFE.

Positions 96-154 (MLAANYLNIKDLLDLGCQTVADMITGKKPDEIRALLGIENDFTPEEEEEIRKENQWAFE) are interaction with the F-box domain of F-box proteins.

Belongs to the SKP1 family. Part of a SCF (SKP1-cullin-F-box) protein ligase complex. Interacts with ADO3/FKF1, EBF1, PP2A13, SKIP15, SKIP16, CPR1/CPR30, At1g55000, At3g61590, At1g67340, At1g78100, At3g04660, At4g38940, At4g39550 and At5g49610. Mostly expressed in inflorescences, and, to a lower extent, in seedlings and siliques. Also detected in cotyledons, leaves, pollen and seeds.

The protein localises to the nucleus. The protein operates within protein modification; protein ubiquitination. Involved in ubiquitination and subsequent proteasomal degradation of target proteins. Together with CUL1, RBX1 and a F-box protein, it forms a SCF E3 ubiquitin ligase complex. The functional specificity of this complex depends on the type of F-box protein. In the SCF complex, it serves as an adapter that links the F-box protein to CUL1. The polypeptide is SKP1-like protein 13 (ASK13) (Arabidopsis thaliana (Mouse-ear cress)).